Consider the following 409-residue polypeptide: Inactive serine protease 35 (409 aa).

Residues 1-20 (MENTLLWLVILIPGWALSDG) form the signal peptide. N-linked (GlcNAc...) asparagine glycosylation is present at Asn-90. Residues 124–404 (VYGTDSRFSI…ICLWIHGNAA (281 aa)) form the Peptidase S1 domain. Cysteines 154 and 170 form a disulfide. Residues 188–207 (VLKMRNKGGRKKRRGSKRSR) are compositionally biased toward basic residues. Residues 188 to 247 (VLKMRNKGGRKKRRGSKRSRREAESAGQSQAHLRESTTQRPGKKSRRGPRVTQGRPSFQW) are disordered.

The protein belongs to the peptidase S1 family. As to expression, in ovary, it localizes to the theca cells of pre-antral follicles, the theca and granulosa cells of pre-ovulatory and ovulatory follicles, as well as to the developing corpus luteum.

It localises to the secreted. This Mus musculus (Mouse) protein is Inactive serine protease 35 (Prss35).